The following is a 1160-amino-acid chain: Envelope glycoprotein (1160 aa).

Residues 1-22 (MDTPGSLQVIAIISLLLVGGAS) form the signal peptide. Residues 23–853 (QPATFLEKAL…DGSVWSQLQL (831 aa)) are Extracellular-facing. Asn-50, Asn-95, Asn-109, Asn-134, Asn-148, Asn-232, Asn-254, Asn-304, Asn-323, Asn-621, Asn-664, Asn-722, and Asn-771 each carry an N-linked (GlcNAc...) asparagine; by host glycan. Residues 230-251 (VPNSTLSPTGTTDFTKFTPNPI) form a disordered region. A helical membrane pass occupies residues 854–874 (IIVVITCTIPLLWVLNTCLFF). Over 875–1048 (KLRRAIRRER…VNQHAEYMGK (174 aa)) the chain is Cytoplasmic. The helical transmembrane segment at 1049–1069 (PVIVTLAGLVITPVGLAWIPL) threads the bilayer. Residues 1070–1127 (PQQEPLEKLFMVPNSMPHVTVAMADYHETKEMGKIVKDINNEELLLVKPQLFKWGPEG) are Extracellular-facing. Residues 1128 to 1148 (FFVACPLVIRGVVTGHSLLHI) form a helical membrane-spanning segment. The Cytoplasmic portion of the chain corresponds to 1149–1160 (ACPATAVQAEGT).

The mature envelope protein (Env) consists of a trimer of SU-TM heterodimers attached by non-covalent interactions or by a labile interchain disulfide bond. Post-translationally, specific enzymatic cleavages in vivo yield mature proteins. Envelope glycoproteins are synthesized as an inactive precursor that is N-glycosylated and processed likely by host cell furin or by a furin-like protease in the Golgi to yield the mature SU and TM proteins. The cleavage site between SU and TM requires the minimal sequence [KR]-X-[KR]-R.

It localises to the virion membrane. The protein localises to the host cell membrane. Its function is as follows. (SU) attaches the virus to the host cell by binding to its receptor. This interaction triggers the refolding of the transmembrane protein (TM) and is thought to activate its fusogenic potential by unmasking its fusion peptide. Fusion occurs at the host cell plasma membrane. In terms of biological role, (TM) acts as a class I viral fusion protein. Under the current model, the protein has at least 3 conformational states: pre-fusion native state, pre-hairpin intermediate state, and post-fusion hairpin state. During viral and target cell membrane fusion, the coiled coil regions (heptad repeats) assume a trimer-of-hairpins structure, positioning the fusion peptide in close proximity to the C-terminal region of the ectodomain. The formation of this structure appears to drive apposition and subsequent fusion of viral and target cell membranes. Membranes fusion leads to delivery of the nucleocapsid into the cytoplasm. In Walleye dermal sarcoma virus (WDSV), this protein is Envelope glycoprotein (env).